Reading from the N-terminus, the 84-residue chain is CDC42 small effector protein 2-A (84 aa).

Residues cysteine 10 and cysteine 11 are each lipidated (S-palmitoyl cysteine). Positions 29-42 (IGEPTNFVHTAHVG) constitute a CRIB domain.

The protein belongs to the CDC42SE/SPEC family.

The protein resides in the cytoplasm. The protein localises to the cytoskeleton. Its subcellular location is the cell membrane. In terms of biological role, probably involved in the organization of the actin cytoskeleton by acting downstream of CDC42, inducing actin filament assembly. The polypeptide is CDC42 small effector protein 2-A (cdc42se2-a) (Xenopus laevis (African clawed frog)).